Consider the following 82-residue polypeptide: Protein ImpC (82 aa).

It belongs to the DinI family.

The imp operon is involved in UV protection and mutation, however the ImpC protein is not essential for these functions. The protein is Protein ImpC (impC) of Salmonella typhimurium.